Consider the following 549-residue polypeptide: Cytoplasmic trehalase (549 aa).

Residues Arg-168, 175–176, Asn-212, 221–223, 292–294, and Gly-324 contribute to the substrate site; these read WD, RSQ, and RDE. Catalysis depends on proton donor/acceptor residues Asp-326 and Glu-509. A substrate-binding site is contributed by Glu-525.

It belongs to the glycosyl hydrolase 37 family. Monomer.

The protein resides in the cytoplasm. The catalysed reaction is alpha,alpha-trehalose + H2O = alpha-D-glucose + beta-D-glucose. It participates in glycan degradation; trehalose degradation; D-glucose from alpha,alpha-trehalose: step 1/1. Functionally, hydrolyzes trehalose to glucose. Could be involved, in cells returning to low osmolarity conditions, in the utilization of the accumulated cytoplasmic trehalose, which was synthesized in response to high osmolarity. The sequence is that of Cytoplasmic trehalase from Salmonella choleraesuis (strain SC-B67).